We begin with the raw amino-acid sequence, 534 residues long: MGLRLLFSLICVFCISNIFTQAFLVHQIYGNSSFTKISLNQLEGRDSQEELQRRQEIRYYGRAAETGGTPTYYGYATPTSSSEPSIFSESATPSETNSYSSPVSSYSDPATSQLPSSTSFFSPTSSEYTPSSTESSSLLDPSSVSSAILPSSTSVEVSISSSSLSSSDPLTSSTFSSLSSSTSSSQPSVSSTSSSTFSSAAPTSTSSSYLSSSSVVSSSSSPSSSSSSTLTSSSLSTSSIPSTSSSSSSTSSSLSSSSSSSTASSSSSSSSIISSSSSSSSSPTSTSSTISSSSSSSSSPTSTSSTISSSSSSSSSFSSTLSSSSMSSSSSFSSSPTSSSSTISSSSSSPSSSSFSSTTSSSKSSSSFSSTVSSSSSTSSSTLTSSSSSSSRPASSSSHSSSLSSHKSSSSSKSSSAPVSSAFYHNSTSSRSSSHSSSHSLSSLSSKPILTASSSSLLTSSSHTYERSTVYVVTVETVSSGSSTYASQSTQTSILLVIVGDSSSTDSSGASSTHSKTSIFFSLFVVLAAAIVII.

An N-terminal signal peptide occupies residues 1–22 (MGLRLLFSLICVFCISNIFTQA). N-linked (GlcNAc...) asparagine glycosylation is present at Asn31. 2 disordered regions span residues 70–145 (PTYY…SSVS) and 176–418 (SSLS…SSAP). N-linked (GlcNAc...) asparagine glycosylation is present at Asn426.

It is found in the endoplasmic reticulum. It localises to the cell membrane. This is an uncharacterized protein from Schizosaccharomyces pombe (strain 972 / ATCC 24843) (Fission yeast).